A 132-amino-acid chain; its full sequence is Small ribosomal subunit protein uS8 (132 aa).

The protein belongs to the universal ribosomal protein uS8 family. Part of the 30S ribosomal subunit. Contacts proteins S5 and S12.

One of the primary rRNA binding proteins, it binds directly to 16S rRNA central domain where it helps coordinate assembly of the platform of the 30S subunit. This Desulforamulus reducens (strain ATCC BAA-1160 / DSM 100696 / MI-1) (Desulfotomaculum reducens) protein is Small ribosomal subunit protein uS8.